The primary structure comprises 443 residues: tRNA modification GTPase MnmE (443 aa).

(6S)-5-formyl-5,6,7,8-tetrahydrofolate-binding residues include arginine 23, glutamate 82, and lysine 121. In terms of domain architecture, TrmE-type G spans 215-364; it reads GTSIVLAGHP…LKQFIQKWMQ (150 aa). Asparagine 225 provides a ligand contact to K(+). Residues 225-230, 244-250, and 269-272 contribute to the GTP site; these read NVGKSS, TDIPGTT, and DSAG. Serine 229 lines the Mg(2+) pocket. Residues threonine 244, isoleucine 246, and threonine 249 each contribute to the K(+) site. Threonine 250 serves as a coordination point for Mg(2+). Lysine 443 contacts (6S)-5-formyl-5,6,7,8-tetrahydrofolate.

Belongs to the TRAFAC class TrmE-Era-EngA-EngB-Septin-like GTPase superfamily. TrmE GTPase family. As to quaternary structure, homodimer. Heterotetramer of two MnmE and two MnmG subunits. K(+) is required as a cofactor.

The protein localises to the cytoplasm. Functionally, exhibits a very high intrinsic GTPase hydrolysis rate. Involved in the addition of a carboxymethylaminomethyl (cmnm) group at the wobble position (U34) of certain tRNAs, forming tRNA-cmnm(5)s(2)U34. The sequence is that of tRNA modification GTPase MnmE from Chlamydia caviae (strain ATCC VR-813 / DSM 19441 / 03DC25 / GPIC) (Chlamydophila caviae).